The sequence spans 206 residues: tRNA (guanine-N(7)-)-methyltransferase (206 aa).

Residues Glu37, Glu62, Asp89, and Asp112 each coordinate S-adenosyl-L-methionine. Asp112 is an active-site residue. Substrate contacts are provided by Lys116 and Asp148.

The protein belongs to the class I-like SAM-binding methyltransferase superfamily. TrmB family.

The catalysed reaction is guanosine(46) in tRNA + S-adenosyl-L-methionine = N(7)-methylguanosine(46) in tRNA + S-adenosyl-L-homocysteine. It functions in the pathway tRNA modification; N(7)-methylguanine-tRNA biosynthesis. In terms of biological role, catalyzes the formation of N(7)-methylguanine at position 46 (m7G46) in tRNA. The chain is tRNA (guanine-N(7)-)-methyltransferase from Myxococcus xanthus (strain DK1622).